The primary structure comprises 84 residues: Large ribosomal subunit protein bL27 (84 aa).

Residues 1 to 11 (MATTKAGGSTK) are compositionally biased toward polar residues. Residues 1–20 (MATTKAGGSTKNGRDSHSKR) are disordered.

Belongs to the bacterial ribosomal protein bL27 family.

This is Large ribosomal subunit protein bL27 from Mycoplasmopsis synoviae (strain 53) (Mycoplasma synoviae).